Here is a 358-residue protein sequence, read N- to C-terminus: Triacylglycerol lipase (358 aa).

Positions 1 to 39 (MVRSMRSRVAARAVAWALAVMPLAGAAGLTMAASPAAVA) are cleaved as a signal peptide. Positions 48-327 (YPVILVHGLA…TSYHWNHLDE (280 aa)) constitute an AB hydrolase-1 domain. L56 serves as a coordination point for substrate. S126 (nucleophile) is an active-site residue. Q127 lines the substrate pocket. A disulfide bridge connects residues C229 and C308. A Ca(2+)-binding site is contributed by D280. Residues D302 and H324 each act as charge relay system in the active site. 3 residues coordinate Ca(2+): D326, Q330, and V334.

Belongs to the AB hydrolase superfamily. Pseudomonas lipase family. In terms of assembly, monomer. Interacts with lipase-specific foldase Lif. Ca(2+) is required as a cofactor.

It is found in the secreted. The enzyme catalyses a triacylglycerol + H2O = a diacylglycerol + a fatty acid + H(+). Catalyzes the hydrolysis of triacylglycerol. The sequence is that of Triacylglycerol lipase from Burkholderia plantarii.